The following is a 311-amino-acid chain: Ribosomal RNA small subunit methyltransferase H (311 aa).

S-adenosyl-L-methionine contacts are provided by residues 39–41 (GGH), aspartate 59, phenylalanine 81, aspartate 102, and histidine 109.

This sequence belongs to the methyltransferase superfamily. RsmH family.

The protein resides in the cytoplasm. The enzyme catalyses cytidine(1402) in 16S rRNA + S-adenosyl-L-methionine = N(4)-methylcytidine(1402) in 16S rRNA + S-adenosyl-L-homocysteine + H(+). Its function is as follows. Specifically methylates the N4 position of cytidine in position 1402 (C1402) of 16S rRNA. This chain is Ribosomal RNA small subunit methyltransferase H, found in Porphyromonas gingivalis (strain ATCC BAA-308 / W83).